We begin with the raw amino-acid sequence, 150 residues long: Avidin-related protein 4/5 (150 aa).

Residues 1-24 (MVHTTSPLLLLLLLSLALVAPSLS) form the signal peptide. The 122-residue stretch at 26–147 (RKCSLTGKWT…GYNNFTRLCT (122 aa)) folds into the Avidin-like domain. Residues C28 and C105 are joined by a disulfide bond. Residues N36, S40, Y57, T59, and D63 each coordinate biotin. N-linked (GlcNAc...) asparagine glycans are attached at residues N67 and N93. Positions 95 and 140 each coordinate biotin. N-linked (GlcNAc...) asparagine glycosylation occurs at N141.

The protein belongs to the avidin/streptavidin family. In terms of assembly, homotetramer.

The protein resides in the secreted. Forms a strong non-covalent specific complex with biotin. The chain is Avidin-related protein 4/5 (AVR4) from Gallus gallus (Chicken).